The sequence spans 91 residues: Probable Fe(2+)-trafficking protein (91 aa).

It belongs to the Fe(2+)-trafficking protein family.

Could be a mediator in iron transactions between iron acquisition and iron-requiring processes, such as synthesis and/or repair of Fe-S clusters in biosynthetic enzymes. In Shewanella amazonensis (strain ATCC BAA-1098 / SB2B), this protein is Probable Fe(2+)-trafficking protein.